The primary structure comprises 1002 residues: Carboxypeptidase Y (1002 aa).

The signal sequence occupies residues 1–18; that stretch reads MLMKQTFLYFLLTCVVSA. Positions 19–521 are excised as a propeptide; that stretch reads QFNGYVPPEQ…AYLEMLKAEG (503 aa). 3 disordered regions span residues 51–91, 124–436, and 527–546; these read QEES…TALE, DEDE…NMQS, and AFRD…ADSS. Composition is skewed to basic and acidic residues over residues 63–81 and 127–143; these read PERD…HEFN and EHVR…EDAP. Over residues 144-170 the composition is skewed to basic residues; that stretch reads RRKHGKCKGKGKHHKGKHAKGKGKKSH. The segment covering 171-205 has biased composition (basic and acidic residues); that stretch reads PKPEDDSVFFDDERPKHHEFDDEDREFPAHHEPGE. 15 repeat units span residues 225–237, 238–250, 251–263, 264–276, 277–289, 290–302, 303–315, 316–328, 329–341, 361–369, 370–378, 379–387, 388–396, 397–405, and 406–414. The tract at residues 225–341 is 9 X 13 AA tandem repeats of M-H-H-E-P-G-E-H-M-P-P-P-P; it reads MHHEPGEHMP…EPGEHMPPPP (117 aa). The segment covering 343–431 has biased composition (basic and acidic residues); it reads KHHELEEHEG…PKEKHNERPE (89 aa). The 7 X 9 AA tandem repeats of D-K-E-H-H-K-G-P-K stretch occupies residues 361 to 423; it reads DKEHHKGPKD…KDKEHHQGPK (63 aa). The stretch at 415 to 423 is one 2-7; approximate repeat; the sequence is DKEHHQGPK. 5 disulfide bridges follow: C627-C880, C776-C789, C799-C822, C806-C815, and C844-C851. N-linked (GlcNAc...) asparagine glycosylation occurs at N659. S715 is an active-site residue. The active site involves D921. C924 contributes to the substrate binding site. H978 is an active-site residue. M979 serves as a coordination point for substrate.

Belongs to the peptidase S10 family. As to quaternary structure, heterodimer of two subunits of 32 kDa and 19 kDa derived from the precursor protein and linked by a disulfide bond.

Its subcellular location is the vacuole. It carries out the reaction Release of a C-terminal amino acid with broad specificity.. Its function is as follows. Involved in degradation of small peptides. Digests preferentially peptides containing an aliphatic or hydrophobic residue in P1' position, as well as methionine, leucine or phenylalanine in P1 position of ester substrate. This is Carboxypeptidase Y (cpy1) from Schizosaccharomyces pombe (strain 972 / ATCC 24843) (Fission yeast).